A 340-amino-acid polypeptide reads, in one-letter code: Deubiquitinase SseL (340 aa).

His222 is an active-site residue. Catalysis depends on Cys284, which acts as the Nucleophile.

It belongs to the peptidase C79 family.

It is found in the secreted. Its subcellular location is the host cytoplasm. Effector proteins function to alter host cell physiology and promote bacterial survival in host tissues. This protease targets the host cell ubiquitin pathway by acting as a deubiquitinase in infected host cells. The protein is Deubiquitinase SseL (sseL) of Salmonella arizonae (strain ATCC BAA-731 / CDC346-86 / RSK2980).